The chain runs to 64 residues: Large ribosomal subunit protein bL35c (64 aa).

It belongs to the bacterial ribosomal protein bL35 family.

The protein resides in the plastid. It is found in the chloroplast. This Cyanidium caldarium (Red alga) protein is Large ribosomal subunit protein bL35c.